A 147-amino-acid chain; its full sequence is Nucleoside diphosphate kinase (147 aa).

Residues K9, F57, R85, T91, R102, and N112 each coordinate ATP. H115 functions as the Pros-phosphohistidine intermediate in the catalytic mechanism.

The protein belongs to the NDK family. Mg(2+) is required as a cofactor.

It is found in the cytoplasm. It carries out the reaction a 2'-deoxyribonucleoside 5'-diphosphate + ATP = a 2'-deoxyribonucleoside 5'-triphosphate + ADP. It catalyses the reaction a ribonucleoside 5'-diphosphate + ATP = a ribonucleoside 5'-triphosphate + ADP. Its function is as follows. Major role in the synthesis of nucleoside triphosphates other than ATP. The ATP gamma phosphate is transferred to the NDP beta phosphate via a ping-pong mechanism, using a phosphorylated active-site intermediate. The protein is Nucleoside diphosphate kinase of Ignicoccus hospitalis (strain KIN4/I / DSM 18386 / JCM 14125).